Reading from the N-terminus, the 391-residue chain is Succinate--CoA ligase [ADP-forming] subunit beta (391 aa).

In terms of domain architecture, ATP-grasp spans 9 to 237; that stretch reads RDLFEKHGVP…RATTDPLELR (229 aa). Residues lysine 46, 53 to 55, alanine 95, and glutamate 100 each bind ATP; that span reads GRG. Mg(2+)-binding residues include asparagine 192 and aspartate 206. Substrate is bound by residues asparagine 257 and 320 to 322; that span reads GIT.

The protein belongs to the succinate/malate CoA ligase beta subunit family. Heterotetramer of two alpha and two beta subunits. Mg(2+) serves as cofactor.

The catalysed reaction is succinate + ATP + CoA = succinyl-CoA + ADP + phosphate. It carries out the reaction GTP + succinate + CoA = succinyl-CoA + GDP + phosphate. It participates in carbohydrate metabolism; tricarboxylic acid cycle; succinate from succinyl-CoA (ligase route): step 1/1. In terms of biological role, succinyl-CoA synthetase functions in the citric acid cycle (TCA), coupling the hydrolysis of succinyl-CoA to the synthesis of either ATP or GTP and thus represents the only step of substrate-level phosphorylation in the TCA. The beta subunit provides nucleotide specificity of the enzyme and binds the substrate succinate, while the binding sites for coenzyme A and phosphate are found in the alpha subunit. The sequence is that of Succinate--CoA ligase [ADP-forming] subunit beta from Cutibacterium acnes (strain DSM 16379 / KPA171202) (Propionibacterium acnes).